Here is a 128-residue protein sequence, read N- to C-terminus: Fluoride-specific ion channel FluC (128 aa).

Helical transmembrane passes span 5–25 (ALVALGSAIGGTLRYWLSMVI), 32–52 (TFPWATLVINVAGSAAIGLFA), 70–90 (FFMVGICGGFTTFSSFSLQTL), and 106–126 (VGSVALCLLAVWLGHVAATII). Na(+) contacts are provided by glycine 77 and threonine 80.

The protein belongs to the fluoride channel Fluc/FEX (TC 1.A.43) family.

The protein localises to the cell inner membrane. The catalysed reaction is fluoride(in) = fluoride(out). With respect to regulation, na(+) is not transported, but it plays an essential structural role and its presence is essential for fluoride channel function. Functionally, fluoride-specific ion channel. Important for reducing fluoride concentration in the cell, thus reducing its toxicity. This chain is Fluoride-specific ion channel FluC, found in Paramagnetospirillum magneticum (strain ATCC 700264 / AMB-1) (Magnetospirillum magneticum).